The chain runs to 149 residues: Ribonuclease HI (149 aa).

One can recognise an RNase H type-1 domain in the interval 1–142 (MTPKVTIYTD…ADALANEGLR (142 aa)). Residues Asp-10, Glu-48, Asp-70, and Asp-134 each coordinate Mg(2+).

Belongs to the RNase H family. In terms of assembly, monomer. Mg(2+) is required as a cofactor.

It localises to the cytoplasm. The enzyme catalyses Endonucleolytic cleavage to 5'-phosphomonoester.. In terms of biological role, endonuclease that specifically degrades the RNA of RNA-DNA hybrids. This Caulobacter vibrioides (strain ATCC 19089 / CIP 103742 / CB 15) (Caulobacter crescentus) protein is Ribonuclease HI.